A 353-amino-acid polypeptide reads, in one-letter code: Photosystem II protein D1 (353 aa).

T2 bears the N-acetylthreonine mark. Position 2 is a phosphothreonine (T2). 3 consecutive transmembrane segments (helical) span residues 29–46, 118–133, and 142–156; these read YIGW…TATS, HFLL…EWEL, and WIAV…AATA. Residue H118 participates in chlorophyll a binding. Position 126 (Y126) interacts with pheophytin a. Residues D170 and E189 each coordinate [CaMn4O5] cluster. A helical membrane pass occupies residues 197–218; sequence FHMLGVAGVFGGSLFSAMHGSL. H198 contributes to the chlorophyll a binding site. A quinone contacts are provided by residues H215 and 264–265; that span reads SF. H215 lines the Fe cation pocket. H272 provides a ligand contact to Fe cation. A helical transmembrane segment spans residues 274–288; the sequence is FLAAWPVAGIWFTAL. 4 residues coordinate [CaMn4O5] cluster: H332, E333, D342, and A344. Positions 345 to 353 are excised as a propeptide; that stretch reads AVESISIGG.

It belongs to the reaction center PufL/M/PsbA/D family. As to quaternary structure, PSII is composed of 1 copy each of membrane proteins PsbA, PsbB, PsbC, PsbD, PsbE, PsbF, PsbH, PsbI, PsbJ, PsbK, PsbL, PsbM, PsbT, PsbX, PsbY, PsbZ, Psb30/Ycf12, at least 3 peripheral proteins of the oxygen-evolving complex and a large number of cofactors. It forms dimeric complexes. Requires The D1/D2 heterodimer binds P680, chlorophylls that are the primary electron donor of PSII, and subsequent electron acceptors. It shares a non-heme iron and each subunit binds pheophytin, quinone, additional chlorophylls, carotenoids and lipids. D1 provides most of the ligands for the Mn4-Ca-O5 cluster of the oxygen-evolving complex (OEC). There is also a Cl(-1) ion associated with D1 and D2, which is required for oxygen evolution. The PSII complex binds additional chlorophylls, carotenoids and specific lipids. as cofactor. In terms of processing, tyr-161 forms a radical intermediate that is referred to as redox-active TyrZ, YZ or Y-Z. C-terminally processed by CTPA; processing is essential to allow assembly of the oxygen-evolving complex and thus photosynthetic growth.

The protein localises to the plastid. It is found in the chloroplast thylakoid membrane. It carries out the reaction 2 a plastoquinone + 4 hnu + 2 H2O = 2 a plastoquinol + O2. In terms of biological role, photosystem II (PSII) is a light-driven water:plastoquinone oxidoreductase that uses light energy to abstract electrons from H(2)O, generating O(2) and a proton gradient subsequently used for ATP formation. It consists of a core antenna complex that captures photons, and an electron transfer chain that converts photonic excitation into a charge separation. The D1/D2 (PsbA/PsbD) reaction center heterodimer binds P680, the primary electron donor of PSII as well as several subsequent electron acceptors. The polypeptide is Photosystem II protein D1 (Pinus contorta (Shore pine)).